Reading from the N-terminus, the 466-residue chain is Endoglucanase E-5 (466 aa).

The signal sequence occupies residues 1 to 36 (MAKSPAARKGXPPVAVAVTAALALLIALLSPGVAQA). One can recognise a CBM2 domain in the interval 37–139 (AGLTATVTKE…TINGAPCDEG (103 aa)). Residues 129–166 (CTINGAPCDEGSEPGGPGGPGTPSPDPGTQPGTGTPVE) are disordered. The Proton donor role is filled by E299. Catalysis depends on E391, which acts as the Nucleophile.

It belongs to the glycosyl hydrolase 5 (cellulase A) family.

It carries out the reaction Endohydrolysis of (1-&gt;4)-beta-D-glucosidic linkages in cellulose, lichenin and cereal beta-D-glucans.. It participates in glycan metabolism; cellulose degradation. The chain is Endoglucanase E-5 (celE) from Thermobifida fusca (Thermomonospora fusca).